A 246-amino-acid polypeptide reads, in one-letter code: MRAQSCSLFLEMKCREEFVLSKGPGVEKMFDAIAGRYDLMNKVMTMGQDQRWRRFVVAKAGDPGAGQVLDLATGTGDIAALMHRSYPRAQVTGGDFSRNMLEEAKKRFAGQGIDWQVCDANKLPFADNTFEAVTFGYLLRNVDDASSVLAEVYRVLKPGGRCVCLDTTPPAKNIIYPFVQFYFRYGIPLLGRMIAADEAAYAYLSGSTMEFHSAEVLADLFRGAGFVDVHYKKFMLGTIGIHWGVK.

Residues Thr-75, Asp-95, and 119 to 120 each bind S-adenosyl-L-methionine; that span reads DA.

It belongs to the class I-like SAM-binding methyltransferase superfamily. MenG/UbiE family.

The catalysed reaction is a 2-demethylmenaquinol + S-adenosyl-L-methionine = a menaquinol + S-adenosyl-L-homocysteine + H(+). The enzyme catalyses a 2-methoxy-6-(all-trans-polyprenyl)benzene-1,4-diol + S-adenosyl-L-methionine = a 5-methoxy-2-methyl-3-(all-trans-polyprenyl)benzene-1,4-diol + S-adenosyl-L-homocysteine + H(+). The protein operates within quinol/quinone metabolism; menaquinone biosynthesis; menaquinol from 1,4-dihydroxy-2-naphthoate: step 2/2. It participates in cofactor biosynthesis; ubiquinone biosynthesis. Its function is as follows. Methyltransferase required for the conversion of demethylmenaquinol (DMKH2) to menaquinol (MKH2) and the conversion of 2-polyprenyl-6-methoxy-1,4-benzoquinol (DDMQH2) to 2-polyprenyl-3-methyl-6-methoxy-1,4-benzoquinol (DMQH2). In Desulfotalea psychrophila (strain LSv54 / DSM 12343), this protein is Ubiquinone/menaquinone biosynthesis C-methyltransferase UbiE.